Reading from the N-terminus, the 309-residue chain is MQNAGSLVVLGSINADHILNLQSFPTPGETVTGNHYQVAFGGKGANQAVAAGRSGANIAFIACTGDDSIGESVRQQLATDNIDITPVSVIKGESTGVALIFVNGEGENVIGIHAGANAALSPALVEAQRERIANASALLMQLESPLESVMAAAKIAHQNKTIVALNPAPARELPDELLALVDIITPNETEAEKLTGIRVENDEDAAKAAQVLHEKGIRTVLITLGSRGVWASVNGEGQRVPGFRVQAVDTIAAGDTFNGALITALLEEKPLPEAIRFAHAAAAIAVTRKGAQPSVPWREEIDAFLDRQR.

Substrate is bound by residues 14–16 (NAD), 42–46 (GKGAN), and E143. Residues N187 and 223–228 (TLGSRG) contribute to the ATP site. The K(+) site is built by D249 and I251. Residues 254 to 255 (GD) and H279 contribute to the ATP site. D255 is a binding site for substrate. The active-site Proton acceptor is the D255. K(+)-binding residues include A285, R288, G290, and S294.

This sequence belongs to the carbohydrate kinase PfkB family. Ribokinase subfamily. Homodimer. It depends on Mg(2+) as a cofactor.

Its subcellular location is the cytoplasm. It catalyses the reaction D-ribose + ATP = D-ribose 5-phosphate + ADP + H(+). Its pathway is carbohydrate metabolism; D-ribose degradation; D-ribose 5-phosphate from beta-D-ribopyranose: step 2/2. Its activity is regulated as follows. Activated by a monovalent cation that binds near, but not in, the active site. The most likely occupant of the site in vivo is potassium. Ion binding induces a conformational change that may alter substrate affinity. Its function is as follows. Catalyzes the phosphorylation of ribose at O-5 in a reaction requiring ATP and magnesium. The resulting D-ribose-5-phosphate can then be used either for sythesis of nucleotides, histidine, and tryptophan, or as a component of the pentose phosphate pathway. This chain is Ribokinase, found in Escherichia coli O157:H7.